Here is a 243-residue protein sequence, read N- to C-terminus: Triosephosphate isomerase (243 aa).

9–11 (NWK) contacts substrate. His96 acts as the Electrophile in catalysis. The active-site Proton acceptor is the Glu165. Substrate-binding positions include Gly171, Ser204, and 225 to 226 (GG).

It belongs to the triosephosphate isomerase family. Homodimer.

The protein resides in the cytoplasm. The enzyme catalyses D-glyceraldehyde 3-phosphate = dihydroxyacetone phosphate. It participates in carbohydrate biosynthesis; gluconeogenesis. The protein operates within carbohydrate degradation; glycolysis; D-glyceraldehyde 3-phosphate from glycerone phosphate: step 1/1. Functionally, involved in the gluconeogenesis. Catalyzes stereospecifically the conversion of dihydroxyacetone phosphate (DHAP) to D-glyceraldehyde-3-phosphate (G3P). The chain is Triosephosphate isomerase from Prochlorococcus marinus (strain MIT 9313).